Reading from the N-terminus, the 219-residue chain is MDREALLQAVKEARELAKPRNFTQSFEFIATLKEIDMRKPENRIKTEVVLPHGRGKEAKIAVIGTGDLAKQAEELGLTVIRKEEIEELGKNKRKLRKIAKAHDFFIAQADLMPLIGRYMGVILGPRGKMPKPVPANANIKPLVERLKKTVVINTRDKPYFQVLVGNEKMTDEQIVDNIEAVLNVVAKKYEKGLYHIKDAYVKLTMGPAVKVKKEKAKKK.

This sequence belongs to the universal ribosomal protein uL1 family. Part of the 50S ribosomal subunit.

Functionally, probably involved in E site tRNA release. Binds directly to 23S rRNA. In terms of biological role, protein L1 is also a translational repressor protein, it controls the translation of its operon by binding to its mRNA. The chain is Large ribosomal subunit protein uL1 from Methanocaldococcus jannaschii (strain ATCC 43067 / DSM 2661 / JAL-1 / JCM 10045 / NBRC 100440) (Methanococcus jannaschii).